A 1039-amino-acid chain; its full sequence is Translation initiation factor IF-2 (1039 aa).

Disordered stretches follow at residues 39–347 (TISE…KWQE) and 400–452 (ARPP…PEKV). Positions 103 to 125 (RNTTSNAPEASVANNQIASSEAN) are enriched in polar residues. The segment covering 157–176 (PQKPAAPEAEPEAQSQAPAK) has biased composition (low complexity). 2 stretches are compositionally biased toward basic and acidic residues: residues 178-197 (AVEK…ERQP) and 226-243 (PILK…DQAK). Positions 408 to 423 (ARSASAATAAPISSPT) are enriched in low complexity. Positions 432-451 (NNRDQNRRQETEVKRERPEK) are enriched in basic and acidic residues. Positions 533 to 706 (RRPPVVTIMG…LLVAEVGELS (174 aa)) constitute a tr-type G domain. The tract at residues 542–549 (GHVDHGKT) is G1. A GTP-binding site is contributed by 542–549 (GHVDHGKT). A G2 region spans residues 567 to 571 (GITQH). The tract at residues 592-595 (DTPG) is G3. Residues 592–596 (DTPGH) and 646–649 (NKID) each bind GTP. The interval 646 to 649 (NKID) is G4. A G5 region spans residues 682–684 (SAI).

The protein belongs to the TRAFAC class translation factor GTPase superfamily. Classic translation factor GTPase family. IF-2 subfamily.

The protein resides in the cytoplasm. One of the essential components for the initiation of protein synthesis. Protects formylmethionyl-tRNA from spontaneous hydrolysis and promotes its binding to the 30S ribosomal subunits. Also involved in the hydrolysis of GTP during the formation of the 70S ribosomal complex. The chain is Translation initiation factor IF-2 from Nostoc sp. (strain PCC 7120 / SAG 25.82 / UTEX 2576).